The chain runs to 317 residues: 4-hydroxy-3-methylbut-2-enyl diphosphate reductase (317 aa).

Position 12 (Cys-12) interacts with [4Fe-4S] cluster. The (2E)-4-hydroxy-3-methylbut-2-enyl diphosphate site is built by His-41 and His-74. 2 residues coordinate dimethylallyl diphosphate: His-41 and His-74. 2 residues coordinate isopentenyl diphosphate: His-41 and His-74. Cys-97 serves as a coordination point for [4Fe-4S] cluster. Residue His-125 participates in (2E)-4-hydroxy-3-methylbut-2-enyl diphosphate binding. His-125 provides a ligand contact to dimethylallyl diphosphate. His-125 lines the isopentenyl diphosphate pocket. Glu-127 serves as the catalytic Proton donor. Thr-168 is a binding site for (2E)-4-hydroxy-3-methylbut-2-enyl diphosphate. Cys-198 is a [4Fe-4S] cluster binding site. Residues Ser-226, Ser-227, Asn-228, and Ser-270 each contribute to the (2E)-4-hydroxy-3-methylbut-2-enyl diphosphate site. Residues Ser-226, Ser-227, Asn-228, and Ser-270 each contribute to the dimethylallyl diphosphate site. 4 residues coordinate isopentenyl diphosphate: Ser-226, Ser-227, Asn-228, and Ser-270.

The protein belongs to the IspH family. In terms of assembly, homodimer. [4Fe-4S] cluster serves as cofactor.

It catalyses the reaction isopentenyl diphosphate + 2 oxidized [2Fe-2S]-[ferredoxin] + H2O = (2E)-4-hydroxy-3-methylbut-2-enyl diphosphate + 2 reduced [2Fe-2S]-[ferredoxin] + 2 H(+). It carries out the reaction dimethylallyl diphosphate + 2 oxidized [2Fe-2S]-[ferredoxin] + H2O = (2E)-4-hydroxy-3-methylbut-2-enyl diphosphate + 2 reduced [2Fe-2S]-[ferredoxin] + 2 H(+). It functions in the pathway isoprenoid biosynthesis; dimethylallyl diphosphate biosynthesis; dimethylallyl diphosphate from (2E)-4-hydroxy-3-methylbutenyl diphosphate: step 1/1. The protein operates within isoprenoid biosynthesis; isopentenyl diphosphate biosynthesis via DXP pathway; isopentenyl diphosphate from 1-deoxy-D-xylulose 5-phosphate: step 6/6. In terms of biological role, catalyzes the conversion of 1-hydroxy-2-methyl-2-(E)-butenyl 4-diphosphate (HMBPP) into a mixture of isopentenyl diphosphate (IPP) and dimethylallyl diphosphate (DMAPP). Acts in the terminal step of the DOXP/MEP pathway for isoprenoid precursor biosynthesis. The sequence is that of 4-hydroxy-3-methylbut-2-enyl diphosphate reductase from Yersinia pseudotuberculosis serotype O:1b (strain IP 31758).